Reading from the N-terminus, the 275-residue chain is Thymidylate synthase (275 aa).

Residue 138-139 (RR) participates in dUMP binding. C158 functions as the Nucleophile in the catalytic mechanism. DUMP is bound by residues 178–181 (RSCD), N189, and 219–221 (HIY). (6R)-5,10-methylene-5,6,7,8-tetrahydrofolate is bound at residue D181. Residue A274 coordinates (6R)-5,10-methylene-5,6,7,8-tetrahydrofolate.

This sequence belongs to the thymidylate synthase family. Bacterial-type ThyA subfamily. Homodimer.

Its subcellular location is the cytoplasm. It carries out the reaction dUMP + (6R)-5,10-methylene-5,6,7,8-tetrahydrofolate = 7,8-dihydrofolate + dTMP. It participates in pyrimidine metabolism; dTTP biosynthesis. In terms of biological role, catalyzes the reductive methylation of 2'-deoxyuridine-5'-monophosphate (dUMP) to 2'-deoxythymidine-5'-monophosphate (dTMP) while utilizing 5,10-methylenetetrahydrofolate (mTHF) as the methyl donor and reductant in the reaction, yielding dihydrofolate (DHF) as a by-product. This enzymatic reaction provides an intracellular de novo source of dTMP, an essential precursor for DNA biosynthesis. The chain is Thymidylate synthase from Fusobacterium nucleatum subsp. nucleatum (strain ATCC 25586 / DSM 15643 / BCRC 10681 / CIP 101130 / JCM 8532 / KCTC 2640 / LMG 13131 / VPI 4355).